The sequence spans 284 residues: Urease accessory protein UreD (284 aa).

This sequence belongs to the UreD family. As to quaternary structure, ureD, UreF and UreG form a complex that acts as a GTP-hydrolysis-dependent molecular chaperone, activating the urease apoprotein by helping to assemble the nickel containing metallocenter of UreC. The UreE protein probably delivers the nickel.

It is found in the cytoplasm. Its function is as follows. Required for maturation of urease via the functional incorporation of the urease nickel metallocenter. In Bordetella bronchiseptica (strain ATCC BAA-588 / NCTC 13252 / RB50) (Alcaligenes bronchisepticus), this protein is Urease accessory protein UreD.